The sequence spans 96 residues: Integration host factor subunit beta (96 aa).

The protein belongs to the bacterial histone-like protein family. In terms of assembly, heterodimer of an alpha and a beta chain.

Its function is as follows. This protein is one of the two subunits of integration host factor, a specific DNA-binding protein that functions in genetic recombination as well as in transcriptional and translational control. This is Integration host factor subunit beta from Caulobacter vibrioides (strain ATCC 19089 / CIP 103742 / CB 15) (Caulobacter crescentus).